We begin with the raw amino-acid sequence, 87 residues long: uncharacterized protein (87 aa).

The signal sequence occupies residues 1–23 (MAVSVLRLTVVLGLLVLFLTCYA). The tract at residues 24 to 44 (DDKPDKPDDKPDDSGKDPKPD) is disordered.

The protein resides in the secreted. This is an uncharacterized protein from Homo sapiens (Human).